Consider the following 160-residue polypeptide: MKRIDIDDDLYTYIASHTRQIGESASDILRRLLDVNSSEPEADSKSEPTESVFNRLNEQDVRIQKSVVARFLYILSMLYRCHPSEFSQVLDIRGRDRQYFARSEEALLTSGNSTNPKQIPDSPFWVITNTNTTKKKAMLTQVAEKLGYQSADAEKIRDFL.

This sequence belongs to the SeqA family. Homodimer. Polymerizes to form helical filaments.

The protein resides in the cytoplasm. Functionally, negative regulator of replication initiation, which contributes to regulation of DNA replication and ensures that replication initiation occurs exactly once per chromosome per cell cycle. Binds to pairs of hemimethylated GATC sequences in the oriC region, thus preventing assembly of replication proteins and re-initiation at newly replicated origins. Repression is relieved when the region becomes fully methylated. The polypeptide is Negative modulator of initiation of replication (Idiomarina loihiensis (strain ATCC BAA-735 / DSM 15497 / L2-TR)).